We begin with the raw amino-acid sequence, 354 residues long: Protein-glutamate methylesterase/protein-glutamine glutaminase 2 (354 aa).

The 118-residue stretch at 3 to 120 folds into the Response regulatory domain; the sequence is RVVVVDDSMS…PADLADYARD (118 aa). At D54 the chain carries 4-aspartylphosphate. One can recognise a CheB-type methylesterase domain in the interval 164–354; sequence ATRLSRVIAI…MGARLSEALQ (191 aa). Active-site residues include S176, H202, and D298.

The protein belongs to the CheB family. Post-translationally, phosphorylated by CheA. Phosphorylation of the N-terminal regulatory domain activates the methylesterase activity.

The protein localises to the cytoplasm. It catalyses the reaction [protein]-L-glutamate 5-O-methyl ester + H2O = L-glutamyl-[protein] + methanol + H(+). It carries out the reaction L-glutaminyl-[protein] + H2O = L-glutamyl-[protein] + NH4(+). Involved in chemotaxis. Part of a chemotaxis signal transduction system that modulates chemotaxis in response to various stimuli. Catalyzes the demethylation of specific methylglutamate residues introduced into the chemoreceptors (methyl-accepting chemotaxis proteins or MCP) by CheR. Also mediates the irreversible deamidation of specific glutamine residues to glutamic acid. The chain is Protein-glutamate methylesterase/protein-glutamine glutaminase 2 from Burkholderia thailandensis (strain ATCC 700388 / DSM 13276 / CCUG 48851 / CIP 106301 / E264).